The primary structure comprises 390 residues: uncharacterized protein (390 aa).

2 helical membrane passes run Gly-27–Ile-47 and Phe-356–Phe-376.

The protein belongs to the ERGIC family.

The protein localises to the membrane. This is an uncharacterized protein from Schizosaccharomyces pombe (strain 972 / ATCC 24843) (Fission yeast).